Reading from the N-terminus, the 163-residue chain is Neurotrophin-3 (163 aa).

Residues 1–3 (IQS) form the signal peptide. The propeptide occupies 4–119 (TSMDQGILTE…VLNRTSRRKR (116 aa)). The disordered stretch occupies residues 35–61 (KQTARTKDGTQTTVKKSEAEADATASQ). A glycan (N-linked (GlcNAc...) asparagine) is linked at N112.

This sequence belongs to the NGF-beta family.

It is found in the secreted. In terms of biological role, seems to promote the survival of visceral and proprioceptive sensory neurons. In Corallus caninus (Emerald tree boa), this protein is Neurotrophin-3 (NTF3).